The primary structure comprises 241 residues: Terpene cyclase pyr4 (241 aa).

7 helical membrane passes run 20–40, 49–69, 79–99, 113–133, 141–161, 168–188, and 206–226; these read IADW…LAMI, YGMA…YSVI, AVLT…IKFA, LPWI…ALAA, ANWG…CQLM, GASY…GIFL, and FVTW…TFLW.

This sequence belongs to the paxB family.

Its subcellular location is the membrane. The catalysed reaction is 2-oxo-3-[(8S)-epoxy-(2E,6E)-farnesyl]-6-(pyridin-3-yl)-2H-pyran-4-olate + H(+) = deacetylpyripyropene E. It participates in secondary metabolite biosynthesis; terpenoid biosynthesis. In terms of biological role, terpene cyclase; part of the gene cluster that mediates the biosynthesis of pyripyropene A, a specific human acyl-coenzyme A:cholesterol acyltransferase 2 inhibitor. The first step of the pathway is the synthesis of nicotinyl-CoA from nicotinic acid by the nicotinic acid-CoA ligase pyr1. Nicotinyl-CoA is then a substrate of polyketide synthase pyr2 to produce 4-hydroxy-6-(3-pyridinyl)-2H-pyran-2-one (HPPO) which is further prenylated by the polyprenyl transferase pyr6 to yield farnesyl-HPPO. The next steps consist of an epoxidation of farnesyl-HPPO to epoxyfarnesyl-HPPO by FAD-dependent monooxygenase pyr5 and a cyclization of the terpenoid portion by the terpene cyclase pyr4 to yield deacetyl-pyripyropene E. The 2 cytochrome P450 monooxygenases pyr3 and pyr9, and the 2 acetyltransferases pyr7 and pyr8 are involved in the conversion of deacetyl-pyripyropene E into pyripyropene A through several cycles of oxidation and acetylation steps. Pyr7 acetylates deacetyl-pyripyropene E to pyripyropene E which is oxidized to 11-deacetyl-pyripyropene O by pyr3, which is in turn acetylated into pyripyropene O by pyr8. Pyripyropene O is then oxidized to deacetyl-pyripyropene A by pyr9. Deacetyl-pyripyropene A is finally acetylated to pyripyropene A by pyr8. The sequence is that of Terpene cyclase pyr4 from Aspergillus fumigatus (strain ATCC MYA-4609 / CBS 101355 / FGSC A1100 / Af293) (Neosartorya fumigata).